A 96-amino-acid polypeptide reads, in one-letter code: Protein transport protein Sec61 subunit beta (96 aa).

Positions 1 to 17 are enriched in polar residues; sequence MPGPTPSGTNVGSSGRS. The segment at 1–54 is disordered; sequence MPGPTPSGTNVGSSGRSPSKAVAARAAGSTVRQRKNASCGTRSAGRTTSAGTGG. At P2 the chain carries N-acetylproline. The Cytoplasmic portion of the chain corresponds to 2 to 71; it reads PGPTPSGTNV…DSPGLKVGPV (70 aa). S7 carries the post-translational modification Phosphoserine. T9 bears the Phosphothreonine mark. Phosphoserine occurs at positions 13, 14, and 17. Residue C39 is the site of S-palmitoyl cysteine attachment. Residues 40–50 are compositionally biased toward low complexity; sequence GTRSAGRTTSA. The chain crosses the membrane as a helical span at residues 72-91; that stretch reads PVLVMSLLFIASVFMLHIWG. Over 92-96 the chain is Lumenal; the sequence is KYTRS.

This sequence belongs to the SEC61-beta family. The SEC61 channel-forming translocon complex consists of channel-forming core components SEC61A1, SEC61B and SEC61G and different auxiliary components such as SEC62 and SEC63. The SEC61 channel associates with the multi-pass translocon (MPT) complex. Interacts with TRAM1.

It localises to the endoplasmic reticulum membrane. Its function is as follows. Component of SEC61 channel-forming translocon complex that mediates transport of signal peptide-containing precursor polypeptides across the endoplasmic reticulum (ER). Forms a ribosome receptor and a gated pore in the ER membrane, both functions required for cotranslational translocation of nascent polypeptides. The SEC61 channel is also involved in ER membrane insertion of transmembrane proteins: it mediates membrane insertion of the first few transmembrane segments of proteins, while insertion of subsequent transmembrane regions of multi-pass membrane proteins is mediated by the multi-pass translocon (MPT) complex. The SEC61 channel cooperates with the translocating protein TRAM1 to import nascent proteins into the ER. The protein is Protein transport protein Sec61 subunit beta (SEC61B) of Canis lupus familiaris (Dog).